The chain runs to 41 residues: Augerpeptide-s11a (41 aa).

Post-translationally, contains 4 disulfide bonds. As to expression, expressed by the venom duct.

Its subcellular location is the secreted. Functionally, does not elicit any observable symptomatology in C.elegans. The protein is Augerpeptide-s11a of Terebra subulata (Chocolate spotted auger).